The primary structure comprises 1221 residues: DNA-directed RNA polymerase subunit beta (1221 aa).

Positions 1176–1221 are disordered; that stretch reads EKKKLAEEEAEIAAEAEAEGSAEGDAAEADADANEAETADDDKASK. A compositionally biased stretch (acidic residues) spans 1183–1215; the sequence is EEAEIAAEAEAEGSAEGDAAEADADANEAETAD.

It belongs to the RNA polymerase beta chain family. As to quaternary structure, the RNAP catalytic core consists of 2 alpha, 1 beta, 1 beta' and 1 omega subunit. When a sigma factor is associated with the core the holoenzyme is formed, which can initiate transcription.

The enzyme catalyses RNA(n) + a ribonucleoside 5'-triphosphate = RNA(n+1) + diphosphate. DNA-dependent RNA polymerase catalyzes the transcription of DNA into RNA using the four ribonucleoside triphosphates as substrates. The sequence is that of DNA-directed RNA polymerase subunit beta from Lactobacillus delbrueckii subsp. bulgaricus (strain ATCC 11842 / DSM 20081 / BCRC 10696 / JCM 1002 / NBRC 13953 / NCIMB 11778 / NCTC 12712 / WDCM 00102 / Lb 14).